The chain runs to 580 residues: Mucin-1 (580 aa).

Positions 1–22 are cleaved as a signal peptide; the sequence is MTPDIQAPFLSLLLLFPVLTVA. Topologically, residues 23–489 are extracellular; sequence NVPTLTTSDS…GSGVPGWGIA (467 aa). A compositionally biased stretch (polar residues) spans 28–37; that stretch reads TTSDSINPRR. The segment at 28 to 359 is disordered; that stretch reads TTSDSINPRR…SIALSTSSNP (332 aa). The segment covering 38–88 has biased composition (low complexity); the sequence is TTPVSTTQSSPTSSPTKETSWSTTTTLLTASSPAPSPAASPGHDGASTPTS. 11 repeat units span residues 70–89, 90–109, 110–129, 130–149, 150–169, 170–189, 190–209, 210–229, 230–249, 250–269, and 270–289. The interval 70-289 is 11 X 20 AA approximate tandem repeats of P-A-P-S-P-A-A-S-P-G-H-D-G-A-S-T-P-T-S-S; sequence PAPSPAASPG…QHGASSPTSS (220 aa). Residues Ser-73, Ser-77, and Ser-84 are each glycosylated (O-linked (GalNAc...) serine). O-linked (GalNAc...) threonine glycosylation is found at Thr-85 and Thr-87. Residues Ser-88 and Ser-89 are each glycosylated (O-linked (GalNAc...) serine). Low complexity-rich tracts occupy residues 96–108, 116–128, 136–148, 156–168, 176–188, 196–208, 216–228, 236–248, and 256–306; these read ASPG…TPTS, ASPG…SPTG, and ASPG…MVTS. A glycan (N-linked (GlcNAc...) asparagine) is linked at Asn-161. N-linked (GlcNAc...) asparagine glycosylation is present at Asn-201. The N-linked (GlcNAc...) asparagine glycan is linked to Asn-241. Over residues 308–344 the composition is skewed to polar residues; it reads HKGTSSRATMTPVSKGTPSSVPSSETAPTAASHITRT. Positions 345–357 are enriched in low complexity; it reads AASSPSIALSTSS. An SEA domain is found at 368-475; it reads RVSLYFLSFR…VSVYSAPFPS (108 aa). Residues Asn-384 and Asn-460 are each glycosylated (N-linked (GlcNAc...) asparagine). The chain crosses the membrane as a helical span at residues 490–510; sequence LLVLVCVLVALAIIYLIALVV. Residues Cys-511 and Cys-513 are each lipidated (S-palmitoyl cysteine). Residues 511-580 lie on the Cytoplasmic side of the membrane; it reads CQCGRKKCEQ…TNLAATSANL (70 aa). Residues 519 to 555 are interaction with P53; the sequence is EQLDVFPTLDAYHPMSEYSTYHTHGRYVPPGSTKRSP. Tyr-530 carries the phosphotyrosine; by PDGFR modification. The Interaction with GRB2 motif lies at 530 to 533; it reads YHPM. Tyr-539 is subject to Phosphotyrosine. The disordered stretch occupies residues 544–563; that stretch reads RYVPPGSTKRSPYEEVSAGN. Residue Tyr-545 is modified to Phosphotyrosine; by PDGFR. Residues 550-557 are required for interaction with GSK3B; that stretch reads STKRSPYE. Thr-551 is subject to Phosphothreonine; by PKC/PRKCD. Ser-554 carries the phosphoserine; by GSK3-beta modification. Residue Tyr-556 is modified to Phosphotyrosine; by CSK, EGFR and SRC. Residues 556 to 559 carry the Interaction with SRC and ESR1 motif; the sequence is YEEV. A required for interaction with beta- and gamma-catenins region spans residues 560-568; that stretch reads SAGNGGSNL. Tyr-570 is subject to Phosphotyrosine. Positions 570-572 match the Required for interaction with AP1S2 motif; the sequence is YTN.

In terms of assembly, the alpha subunit forms a tight, non-covalent heterodimeric complex with the proteolytically-released beta subunit. Binds directly the SH2 domain of GRB2, and forms a MUC1/GRB2/SOS1 complex involved in RAS signaling. The cytoplasmic tail (MUC1CT) interacts with several proteins such as, SRC, CTNNB1 and ERBs. Interaction with the SH2 domain of CSK decreases interaction with GSK3B. Interacts with CTNNB1/beta-catenin and JUP/gamma-catenin and promotes cell adhesion. Interaction with JUP/gamma-catenin is induced by heregulin. Binds PRKCD, ERBB2, ERBB3 and ERBB4. Heregulin (HRG) stimulates the interaction with ERBB2 and, to a much lesser extent, the interaction with ERBB3 and ERBB4. Interacts with P53 in response to DNA damage. Interacts with KLF4. Interacts with estrogen receptor alpha/ESR1, through its DNA-binding domain, and stimulates its transcription activity. Binds ADAM17. Highly glycosylated (N- and O-linked carbohydrates and sialic acid). O-linked glycosylation consists mainly of GalNAc, galactose, and sialic acid. The ratio from pools of milk from different dairy breeds is GalNAc: GlcNAc:galactose:mannose:sialic acid is 14:1:10:1:15. In terms of processing, proteolytic cleavage in the SEA domain occurs in the endoplasmic reticulum by an autoproteolytic mechanism and requires the full-length SEA domain as well as requiring a Ser, Thr or Cys residue at the P + 1 site. Ectodomain shedding is mediated by ADAM17 in uterine epithelial cells. Post-translationally, dual palmitoylation on cysteine residues in the CQC motif is required for recycling from endosomes back to the plasma membrane. Phosphorylated on tyrosines and serine residues in the C-terminal. Phosphorylation on tyrosines in the C-terminal increases the nuclear location of MUC1 and beta-catenin. Phosphorylation by PKC delta induces binding of MUC1 to beta-catenin/CTNNB1 and thus decreases the formation of the beta-catenin/E-cadherin complex. Src-mediated phosphorylation inhibits interaction with GSK3B. Csk- or Src- or EGFR-mediated phosphorylation on Tyr-556 increases binding to beta-catenin/CTNNB1. GSK3B-mediated phosphorylation on Ser-554 decreases this interaction but restores the formation of the beta-cadherin/E-cadherin complex. On T-cell receptor activation, phosphorylated by LCK. PDGFR-mediated phosphorylation increases nuclear colocalization of MUC1CT and CTNNB1. Expressed on the apical surface of epithelia cells, and on the milk fat globule membrane (MGGM).

Its subcellular location is the apical cell membrane. The protein localises to the cell membrane. It is found in the cytoplasm. It localises to the nucleus. The alpha subunit has cell adhesive properties. May provide a protective layer on epithelial cells against bacterial and enzyme attack. Its function is as follows. The beta subunit contains a C-terminal domain which is involved in cell signaling, through phosphorylations and protein-protein interactions. Modulates signaling in ERK, Src and NF-kappa-B pathways. In activated T-cells, influences directly or indirectly the Ras/MAPK pathway. Promotes tumor progression. Regulates P53-mediated transcription and determines cell fate in the genotoxic stress response. Binds, together with KLF4, the PE21 promoter element of P53 and represses P53 activity. This is Mucin-1 (MUC1) from Bos taurus (Bovine).